A 1597-amino-acid chain; its full sequence is MKSDQLGRVLSDDDLPTKLSIANEFKAFVKKNSVPRDLIHPYFLTLSRAIKSREDPQLTSVCFSCFCHLFKRVSIQDKQLLDDSATVAVVTDLLIDRLSDRSTGVRATANKVLLDYWVLVPQAVAVAMRQSAVVSSSHVTLGESLKWLQSVFDLSSAFNFSAFVQPVVDMLRYPQLQSSVCELLKKVYSVSDRRELEECLAATGVNEMLKKSILNGLPGGNSSSAVSDPKTTAPRSLSSQKSVASKPAQQPNSQEPGNENAPSSSLAFLNSLPNFRVDSLAPENVYSASDLESKINNMHVAFADKESEKNWSLREKHVTQIRKLLRGNALQDYPSQFAAAYKSVIDGVLKSATSLRTTLSNQGLLLVKESGQLGGNAFVDPVMDIVFPQIIRLTGQMKKITSNNAHITVCGLLTSATFSTKLINHVTSATVEKNAQPRTFAAVWLRILILSHSQTHKSAMQNHGGLDQIEKAIAKGLQDPTPSVKENMRVTYWSFAEYWPSEADKIYRKLDTKAKAMLDKVNPSGAKNAPIKKPAPRESLKEVMRRSRESSVNRDANAPSATAPPQRAKMGAPQRTSSGLVGRSLSGSNLTDRSNRLSSTSTSSRDQQRAVSDSTRPTQMTRPVSGRLSREPSLTRSSRDQSLTRSSRETVSREPSLTRGSRELPKQRVDQNRQRVPSISRDSRYGQRPVGSRESSRQSRESSLDPSRESSLAPSVHSSTAISRESSLPRDDLPSYDVEMDEDDPFVTQQLKLSLKQEDAMSQPEETMNEVTTAEATATTAPMKIPKSTPPRESTPPNSSPFVLAKSPATQGVSTSPATGKSASPPATAEDELSRDLNGESKHLKEVDDDNGSMDADERIESDVVMGDAEESAANFEPSEVEPAGVQLGLKSPKRETPTSALQGNEQAEPESHDAVADSQSHGADSADLQSEPRNVPVSPPTTSDASNVPILSPRPIHPAKFELDSDAMIVDEVAPEVNTVIDAQTQAEETPTEEIPAVVKVGFDAEAKSEPTEQTEAVKTSDTATEPGEPVDIPNSEQGPSTEPTELAKSAGSVEHVTEAIQEDPFGDALPAKQENGAKASDEIETDHTKSNNTESDGPVSAHDESEPMEICDSDNDAVDNGTNPDTKCQDQQDSTTPPMDFSSHDLKDELNTSSPESLTALLSNPDQYKEILDHVPAELFLLCVILFSESHVMDAQSVISRDTNLALSTASSMVMVCARDVYPSDSRWSQATVEELKHVTVTCLEWLTKLVNESSEASTLLATNKRYRTSLVHLLSTSVELHKQKFGDVTHNSLIHVIESMDKLSQRPPDKRTSRAFLEAPSPSPDSSLVEDVTDKLSHVTVKENFKTIRILPPQLASGQLIFPGSEVTWSKLELERLARSPSCSDSNEAILDAVSRDKVSVTQLSTLASRIPELEDVDLVTATILAYLHISHPPALTTAALVAIKQVLIKPELKLSMGHVTEIFSTLNHVNSHIDSRSPLAAAIEELVADLLTHTDSSEMLEFLLLSRSRDSKTQNKLLLLNTVYHVITPDLLPSYETQLLALITELISDPDPLVRRVTVGLVVRVLRVSPEMEGTISLAIKSKMDLVRYYMGA.

4 disordered regions span residues 220–265, 519–958, 1005–1154, and 1307–1332; these read GNSS…PSSS, DKVN…RPIH, DAEA…ELNT, and SQRP…SSLV. The segment covering 535–552 has biased composition (basic and acidic residues); it reads APRESLKEVMRRSRESSV. Over residues 577-605 the composition is skewed to low complexity; it reads SSGLVGRSLSGSNLTDRSNRLSSTSTSSR. Composition is skewed to polar residues over residues 610 to 622 and 632 to 645; these read AVSD…QMTR and PSLT…SLTR. Composition is skewed to basic and acidic residues over residues 660 to 673 and 694 to 708; these read GSRE…DQNR and ESSR…DPSR. A compositionally biased stretch (polar residues) spans 709–726; the sequence is ESSLAPSVHSSTAISRES. Positions 765-781 are enriched in low complexity; sequence EETMNEVTTAEATATTA. 2 stretches are compositionally biased toward polar residues: residues 791-801 and 808-822; these read PRESTPPNSSP and PATQ…TGKS. Positions 832-846 are enriched in basic and acidic residues; sequence ELSRDLNGESKHLKE. Polar residues-rich tracts occupy residues 918-933, 1013-1025, and 1036-1045; these read DSQS…QSEP, TEQT…SDTA, and NSEQGPSTEP. The segment covering 1081 to 1091 has biased composition (basic and acidic residues); the sequence is ASDEIETDHTK. Residues 1108–1119 show a composition bias toward acidic residues; the sequence is EPMEICDSDNDA. Over residues 1122-1139 the composition is skewed to polar residues; the sequence is NGTNPDTKCQDQQDSTTP. The stretch at 1537–1573 is one HEAT repeat; the sequence is PSYETQLLALITELISDPDPLVRRVTVGLVVRVLRVS.

Belongs to the CLASP family. As to quaternary structure, interacts with microtubules.

Its subcellular location is the cytoplasm. The protein resides in the cytoskeleton. It localises to the nucleus. It is found in the spindle. Microtubule binding protein that promotes the stabilization of dynamic microtubules. Required for mitotic spindle formation. The polypeptide is Protein STU1 (STU1) (Yarrowia lipolytica (strain CLIB 122 / E 150) (Yeast)).